A 691-amino-acid chain; its full sequence is DNA-directed RNA polymerase subunit beta' (691 aa).

Residues Cys-76, Cys-78, Cys-94, and Cys-97 each coordinate Zn(2+). Mg(2+) is bound by residues Asp-496, Asp-498, and Asp-500.

Belongs to the RNA polymerase beta' chain family. RpoC1 subfamily. Mg(2+) is required as a cofactor. It depends on Zn(2+) as a cofactor.

The protein localises to the plastid. The enzyme catalyses RNA(n) + a ribonucleoside 5'-triphosphate = RNA(n+1) + diphosphate. Its function is as follows. DNA-dependent RNA polymerase catalyzes the transcription of DNA into RNA using the four ribonucleoside triphosphates as substrates. The chain is DNA-directed RNA polymerase subunit beta' from Cuscuta exaltata (Tall dodder).